A 350-amino-acid chain; its full sequence is Biotin synthase (350 aa).

Residues 54–278 (REIQLSTLLS…TMPQSYVRLS (225 aa)) form the Radical SAM core domain. Residues Cys69, Cys73, and Cys76 each contribute to the [4Fe-4S] cluster site. [2Fe-2S] cluster-binding residues include Cys113, Cys144, Cys204, and Arg276.

Belongs to the radical SAM superfamily. Biotin synthase family. In terms of assembly, homodimer. Requires [4Fe-4S] cluster as cofactor. [2Fe-2S] cluster serves as cofactor.

It catalyses the reaction (4R,5S)-dethiobiotin + (sulfur carrier)-SH + 2 reduced [2Fe-2S]-[ferredoxin] + 2 S-adenosyl-L-methionine = (sulfur carrier)-H + biotin + 2 5'-deoxyadenosine + 2 L-methionine + 2 oxidized [2Fe-2S]-[ferredoxin]. It functions in the pathway cofactor biosynthesis; biotin biosynthesis; biotin from 7,8-diaminononanoate: step 2/2. Catalyzes the conversion of dethiobiotin (DTB) to biotin by the insertion of a sulfur atom into dethiobiotin via a radical-based mechanism. The sequence is that of Biotin synthase from Neisseria gonorrhoeae (strain ATCC 700825 / FA 1090).